The chain runs to 386 residues: Succinate--CoA ligase [ADP-forming] subunit beta (386 aa).

The ATP-grasp domain occupies 9–244 (KEVLRKYGVA…LDEEDPKEIE (236 aa)). Residues lysine 46, 53–55 (GRG), glutamate 99, cysteine 102, and glutamate 107 contribute to the ATP site. Mg(2+) is bound by residues asparagine 199 and aspartate 213. Residues asparagine 264 and 321–323 (GIM) contribute to the substrate site.

The protein belongs to the succinate/malate CoA ligase beta subunit family. In terms of assembly, heterotetramer of two alpha and two beta subunits. Requires Mg(2+) as cofactor.

It carries out the reaction succinate + ATP + CoA = succinyl-CoA + ADP + phosphate. The catalysed reaction is GTP + succinate + CoA = succinyl-CoA + GDP + phosphate. It participates in carbohydrate metabolism; tricarboxylic acid cycle; succinate from succinyl-CoA (ligase route): step 1/1. Functionally, succinyl-CoA synthetase functions in the citric acid cycle (TCA), coupling the hydrolysis of succinyl-CoA to the synthesis of either ATP or GTP and thus represents the only step of substrate-level phosphorylation in the TCA. The beta subunit provides nucleotide specificity of the enzyme and binds the substrate succinate, while the binding sites for coenzyme A and phosphate are found in the alpha subunit. This is Succinate--CoA ligase [ADP-forming] subunit beta from Bacillus licheniformis (strain ATCC 14580 / DSM 13 / JCM 2505 / CCUG 7422 / NBRC 12200 / NCIMB 9375 / NCTC 10341 / NRRL NRS-1264 / Gibson 46).